We begin with the raw amino-acid sequence, 407 residues long: Substance-P receptor (407 aa).

The Extracellular segment spans residues 1-31 (MDNVLPGDSDLFPNISTNSSESNQFVQPAWQ). Asn14 and Asn18 each carry an N-linked (GlcNAc...) asparagine glycan. A helical transmembrane segment spans residues 32–54 (IVLWAAAYTVIVVTSVVGNVVVM). Over 55–64 (WIILAHKRMR) the chain is Cytoplasmic. A helical transmembrane segment spans residues 65 to 86 (TVTNYFLVNLAFAEASMAAFNT). The Extracellular portion of the chain corresponds to 87 to 106 (VVNFTYAVHNEWYYGLFYCK). N-linked (GlcNAc...) asparagine glycosylation occurs at Asn89. A disulfide bond links Cys105 and Cys180. The helical transmembrane segment at 107–128 (FHNFFPIAAVFASIYSMTAVAF) threads the bilayer. The Cytoplasmic segment spans residues 129–148 (DRYMAIIHPLQPRLSATATK). A helical transmembrane segment spans residues 149 to 169 (VVIFVIWVLALLLAFPQGYYS). Residues 170-194 (TTETMPGRVVCMIEWPEHPNRTYEK) lie on the Extracellular side of the membrane. N-linked (GlcNAc...) asparagine glycosylation occurs at Asn189. The helical transmembrane segment at 195–219 (AYHICVTVLIYFLPLLVIGYAYTVV) threads the bilayer. Residues 220 to 248 (GITLWASEIPGDSSDRYHEQVSAKRKVVK) lie on the Cytoplasmic side of the membrane. A helical membrane pass occupies residues 249-270 (MMIVVVCTFAICWLPFHVFFLL). Topologically, residues 271-283 (PYINPDLYVKKFI) are extracellular. Residues 284 to 308 (QQVYLAIMWLAMSSTMYNPIIYCCL) form a helical membrane-spanning segment. Topologically, residues 309 to 407 (NDRFRLGFKH…SSSFYSNMLA (99 aa)) are cytoplasmic. Cys322 carries the S-palmitoyl cysteine lipid modification. The segment at 365–407 (HEDEAEEGPKATPSSLDLTSNGSSRSNSKTMTESSSFYSNMLA) is disordered. The span at 376–407 (TPSSLDLTSNGSSRSNSKTMTESSSFYSNMLA) shows a compositional bias: polar residues.

Belongs to the G-protein coupled receptor 1 family. In terms of assembly, interacts with ARRB1.

It localises to the cell membrane. Functionally, this is a receptor for the tachykinin neuropeptide substance P. It is probably associated with G proteins that activate a phosphatidylinositol-calcium second messenger system. This is Substance-P receptor (TACR1) from Meriones unguiculatus (Mongolian jird).